Here is a 199-residue protein sequence, read N- to C-terminus: MDKKQPHPLFKLATELGPLLVFFAANAKFNLFVATAAFMVAIVAAMIASYVVTRHIPLMALVTGIVVIVFGTLTLVLHDETFIKVKPTIIYSLFAGVLGGGLLFGRSFIAIMFDQVFNLTPRGWQVLTLRWALFFFGMAILNELIWRTQSTDFWVNFKVFGAVPLTMIFAMMQMPLTKRYHLEPATLEASDASEGDVRK.

6 consecutive transmembrane segments (helical) span residues 7-27 (HPLF…AANA), 32-52 (FVAT…SYVV), 56-76 (IPLM…LTLV), 93-113 (LFAG…AIMF), 126-146 (VLTL…ELIW), and 153-173 (FWVN…AMMQ).

It belongs to the YciB family.

It localises to the cell inner membrane. Functionally, plays a role in cell envelope biogenesis, maintenance of cell envelope integrity and membrane homeostasis. This chain is Inner membrane-spanning protein YciB, found in Nitrobacter hamburgensis (strain DSM 10229 / NCIMB 13809 / X14).